Consider the following 156-residue polypeptide: Ribosomal RNA large subunit methyltransferase H (156 aa).

Residues Leu73, Gly104, and 123–128 (ISSMTL) contribute to the S-adenosyl-L-methionine site.

Belongs to the RNA methyltransferase RlmH family. As to quaternary structure, homodimer.

It localises to the cytoplasm. It carries out the reaction pseudouridine(1915) in 23S rRNA + S-adenosyl-L-methionine = N(3)-methylpseudouridine(1915) in 23S rRNA + S-adenosyl-L-homocysteine + H(+). In terms of biological role, specifically methylates the pseudouridine at position 1915 (m3Psi1915) in 23S rRNA. The chain is Ribosomal RNA large subunit methyltransferase H from Burkholderia vietnamiensis (strain G4 / LMG 22486) (Burkholderia cepacia (strain R1808)).